A 458-amino-acid polypeptide reads, in one-letter code: Ammonium transporter Rh type B (458 aa).

The Cytoplasmic portion of the chain corresponds to 1–13 (MAGSPSRAAGRRL). Residues 14 to 34 (QLPLLCLFLQGATAVLFAVFV) form a helical membrane-spanning segment. The Extracellular segment spans residues 35–61 (RYNHKTDAALWHRGNYSNADNEFYFRY). A glycan (N-linked (GlcNAc...) asparagine) is linked at Asn-49. Residues 62 to 82 (PSFQDVHAMVFVGFGFLMVFL) traverse the membrane as a helical segment. Topologically, residues 83-86 (QRYG) are cytoplasmic. Residues 87 to 107 (FSSVGFTFLLAAFALQWSTLV) form a helical membrane-spanning segment. Residues 108–124 (QGFLHSFHSGHIHVGVE) are Extracellular-facing. Residues 125–145 (SMINADFCAGAVLISFGAVLG) traverse the membrane as a helical segment. At 146-149 (KTGP) the chain is on the cytoplasmic side. A helical membrane pass occupies residues 150–170 (AQLLLMALLEVVLFGINEFVL). Residues 171 to 178 (LHLLGVRD) lie on the Extracellular side of the membrane. The helical transmembrane segment at 179–201 (AGGSMTIHTFGAYFGLVLSRVLY) threads the bilayer. The Cytoplasmic segment spans residues 202–219 (RPQLEKSKHRQGSVYHSD). The helical transmembrane segment at 220–240 (LFAMIGTIFLWIFWPSFNSAL) threads the bilayer. The Extracellular segment spans residues 241–251 (TALGAGQHRTA). A helical membrane pass occupies residues 252 to 272 (LNTYYSLAASTLGTFALSALV). The Cytoplasmic portion of the chain corresponds to 273-282 (GEDGRLDMVH). Residues 283-303 (IQNAALAGGVVVGTSSEMMLT) traverse the membrane as a helical segment. Position 304 (Pro-304) is a topological domain, extracellular. A helical transmembrane segment spans residues 305–325 (FGALAAGFLAGTVSTLGYKFF). Residues 326 to 346 (TPILESKFKVQDTCGVHNLHG) are Cytoplasmic-facing. Residues 347–367 (MPGVLGALLGVLVAGLATHEA) traverse the membrane as a helical segment. At 368-393 (YGDGLESVFPLIAEGQRSATSQAMLQ) the chain is on the extracellular side. A helical transmembrane segment spans residues 394-414 (LFGLFVTLMFASVGGGLGGLL). Residues 415-458 (LKLPFLDSPPDSQCYEDQVHWQVPGEHEDEAQRPLRVEEADTQA) lie on the Cytoplasmic side of the membrane. Positions 416 to 424 (KLPFLDSPP) are interaction with ANK3. The Basolateral sorting signal signature appears at 429–432 (YEDQ). The tract at residues 439 to 458 (GEHEDEAQRPLRVEEADTQA) is disordered. Basic and acidic residues predominate over residues 444–458 (EAQRPLRVEEADTQA).

The protein belongs to the ammonium transporter (TC 2.A.49) family. Rh subfamily. As to quaternary structure, interacts (via C-terminus) with ANK2 and ANK3; required for targeting to the basolateral membrane. N-glycosylated.

The protein localises to the cell membrane. The protein resides in the basolateral cell membrane. It catalyses the reaction NH4(+)(in) = NH4(+)(out). The enzyme catalyses methylamine(out) = methylamine(in). The catalysed reaction is CO2(out) = CO2(in). Ammonium transporter involved in the maintenance of acid-base homeostasis. Transports ammonium and its related derivative methylammonium across the basolateral plasma membrane of epithelial cells likely contributing to renal transepithelial ammonia transport and ammonia metabolism. May transport either NH4(+) or NH3 ammonia species predominantly mediating an electrogenic NH4(+) transport. May act as a CO2 channel providing for renal acid secretion. In Papio hamadryas (Hamadryas baboon), this protein is Ammonium transporter Rh type B (RHBG).